We begin with the raw amino-acid sequence, 1091 residues long: Error-prone DNA polymerase (1091 aa).

Residues 1–51 form a disordered region; it reads MGWSNGPPSWAEMERVLNGKPRHAGVPAFDADGDVPRSRKRGAYQPPGRER.

It belongs to the DNA polymerase type-C family. DnaE2 subfamily.

It localises to the cytoplasm. It carries out the reaction DNA(n) + a 2'-deoxyribonucleoside 5'-triphosphate = DNA(n+1) + diphosphate. In terms of biological role, DNA polymerase involved in damage-induced mutagenesis and translesion synthesis (TLS). It is not the major replicative DNA polymerase. The protein is Error-prone DNA polymerase of Mycobacterium bovis (strain ATCC BAA-935 / AF2122/97).